The primary structure comprises 391 residues: Apolipoprotein A-IV (391 aa).

A signal peptide spans 1–20 (MFLKAVVLTVALVAITGTQA). 13 tandem repeats follow at residues 33–54 (DYFTQLSNNAKEAVEQLQKTDV), 60–81 (TLFQDKLGNINTYADDLQNKLV), 82–103 (PFAVQLSGHLTKETERVREEIQ), 115–136 (PHANKVSQMFGDNVQKLQEHLR), 137–158 (PYATDLQAQINAQTQDMKRQLT), 159–180 (PYIQRMQTTIQDNVENLQSSMV), 181–202 (PFANELKEKFNQNMEGLKGQLT), 203–224 (PRANELKATIDQNLEDLRSRLA), 225–246 (PLAEGVQEKLNHQMEGLAFQMK), 247–268 (KNAEELQTKVSTNIDQLQKNLA), 269–286 (PLVEDVQSKLKGNTEGLQ), 287–308 (KSLEDLNKQLDQQVEVFRRAVE), and 309–330 (PLGDKFNMALVQQMEKFRQQLG). The tract at residues 33–330 (DYFTQLSNNA…QMEKFRQQLG (298 aa)) is 13 X 22 AA approximate tandem repeats. At Ser-333 the chain carries Phosphoserine. Residues 354 to 391 (FMSTLQKKGSPDQPLALPLPEQVQEQVQEQVQPKPLES) form a disordered region. A compositionally biased stretch (low complexity) spans 371–391 (PLPEQVQEQVQEQVQPKPLES).

The protein belongs to the apolipoprotein A1/A4/E family. In terms of assembly, homodimer. In terms of tissue distribution, secreted in plasma.

It localises to the secreted. May have a role in chylomicrons and VLDL secretion and catabolism. Required for efficient activation of lipoprotein lipase by ApoC-II; potent activator of LCAT. Apoa-IV is a major component of HDL and chylomicrons. The polypeptide is Apolipoprotein A-IV (Apoa4) (Rattus norvegicus (Rat)).